The following is a 523-amino-acid chain: Maintenance of mitochondrial morphology protein 1 (523 aa).

At 1–43 the chain is on the lumenal side; the sequence is MAGSTSASLQTPYFPSSTQINPVRVDHTLPLPPSQPSLSFTQG. A helical membrane pass occupies residues 44–64; it reads LLVGQLSVVLLIGAFIKFFIF. Over 65–523 the chain is Cytoplasmic; it reads GEAPPPPSRG…GSMPDTVTET (459 aa). Disordered regions lie at residues 70–118, 128–147, 295–349, 420–474, and 492–523; these read PPSR…SSST, YYSA…RLYH, TSDQ…SKHG, RTGL…DRGL, and GGHQ…VTET. 2 stretches are compositionally biased toward polar residues: residues 74–96 and 105–118; these read GLSN…TDSS and STSN…SSST. Residues 137–147 are compositionally biased toward basic residues; sequence TPKHGRPRLYH. The SMP-LTD domain maps to 151-412; it reads QPESLDWFNV…EPRVQVVGLP (262 aa). Residues 295 to 312 show a composition bias toward polar residues; sequence TSDQTMSPIPTPHDTTSE. Residues 449 to 468 are compositionally biased toward gly residues; it reads GVSGGGGSGGGSGGGGGGMR.

The protein belongs to the MMM1 family. As to quaternary structure, homodimer. Component of the ER-mitochondria encounter structure (ERMES) or MDM complex, composed of MMM1, MDM10, MDM12 and MDM34. An MMM1 homodimer associates with one molecule of MDM12 on each side in a pairwise head-to-tail manner, and the SMP-LTD domains of MMM1 and MDM12 generate a continuous hydrophobic tunnel for phospholipid trafficking.

Its subcellular location is the endoplasmic reticulum membrane. Component of the ERMES/MDM complex, which serves as a molecular tether to connect the endoplasmic reticulum (ER) and mitochondria. Components of this complex are involved in the control of mitochondrial shape and protein biogenesis, and function in nonvesicular lipid trafficking between the ER and mitochondria. The MDM12-MMM1 subcomplex functions in the major beta-barrel assembly pathway that is responsible for biogenesis of all outer membrane beta-barrel proteins, and acts in a late step after the SAM complex. The MDM10-MDM12-MMM1 subcomplex further acts in the TOM40-specific pathway after the action of the MDM12-MMM1 complex. Essential for establishing and maintaining the structure of mitochondria and maintenance of mtDNA nucleoids. In Paracoccidioides lutzii (strain ATCC MYA-826 / Pb01) (Paracoccidioides brasiliensis), this protein is Maintenance of mitochondrial morphology protein 1.